A 371-amino-acid polypeptide reads, in one-letter code: Beta sliding clamp (371 aa).

It belongs to the beta sliding clamp family. Forms a ring-shaped head-to-tail homodimer around DNA which binds and tethers DNA polymerases and other proteins to the DNA. The DNA replisome complex has a single clamp-loading complex (3 tau and 1 each of delta, delta', psi and chi subunits) which binds 3 Pol III cores (1 core on the leading strand and 2 on the lagging strand) each with a beta sliding clamp dimer. Additional proteins in the replisome are other copies of gamma, psi and chi, Ssb, DNA helicase and RNA primase.

It is found in the cytoplasm. In terms of biological role, confers DNA tethering and processivity to DNA polymerases and other proteins. Acts as a clamp, forming a ring around DNA (a reaction catalyzed by the clamp-loading complex) which diffuses in an ATP-independent manner freely and bidirectionally along dsDNA. Initially characterized for its ability to contact the catalytic subunit of DNA polymerase III (Pol III), a complex, multichain enzyme responsible for most of the replicative synthesis in bacteria; Pol III exhibits 3'-5' exonuclease proofreading activity. The beta chain is required for initiation of replication as well as for processivity of DNA replication. The chain is Beta sliding clamp (dnaN) from Treponema pallidum (strain Nichols).